A 502-amino-acid polypeptide reads, in one-letter code: MASKKLGTDVHGTFSYLDDVPFKIGDKFKTPAKVGLPIGFSLPDCLQVVREMQYDFSLEKKTIEWAEDIKLIQEAQREAERKAEEAEAKVNSKSGPEGDSKVSFPKTHNTATMPPPINPILASLQHNNILTPTRVSSSATKQKVLSPPHTKADFNPADFECEEDPFDNLELKTIDEKEELRNILVGTTGPIMAQLLDSNTARGSSGAVLQDEEVLASLEQATLDFKPLHKPNGFITLPQLGNCEKMSLSSKVSLPPIPTVSNIKSLSFPKLDSDDSNQKTVKLASTFHSTSCLRSGASRSLLKPSTQSSASELNGDHTLGLSALNLNSGTEVPTLTSSQMPSLSSVSVCTEESSPPDPCPTVTPLNFSVSQVPNMPSCPQAYLELQALSPSERQCVETVVNMGYSYDCVLRAMRKKGENIEQILDYLFAHGQLCEKGFDPLLVEEALEMHQCSEEKMMEFLQLMSKFKEMGFELKDIKEVLLLHNNDQDNALEDLMARAGAS.

The segment at 1–95 (MASKKLGTDV…AEAKVNSKSG (95 aa)) is interaction with ESCRT-I. In terms of domain architecture, UMA spans 17-63 (LDDVPFKIGDKFKTPAKVGLPIGFSLPDCLQVVREMQYDFSLEKKTI). The segment covering 80-100 (ERKAEEAEAKVNSKSGPEGDS) has biased composition (basic and acidic residues). Disordered regions lie at residues 80-117 (ERKAEEAEAKVNSKSGPEGDSKVSFPKTHNTATMPPPI) and 135-156 (VSSSATKQKVLSPPHTKADFNP). Phosphoserine occurs at positions 146, 205, and 289. The segment at 260 to 290 (VSNIKSLSFPKLDSDDSNQKTVKLASTFHST) is interaction with PTPN23. 2 consecutive UBA domains span residues 389 to 430 (SPSE…LFAH) and 451 to 498 (QCSE…LMAR).

In terms of assembly, component of an ESCRT-I complex (endosomal sorting complex required for transport I) which consists of TSG101, VPS28, VPS37A and UBAP1 in a 1:1:1:1 stoichiometry. Interacts with PTPN23. Interacts (via UBA domains) with ubiquitinated proteins. In terms of tissue distribution, ubiquitous. Highly expressed in heart, liver, brain, kidney, spleen, skeletal muscle, stomach, testis and lung.

It localises to the cytoplasm. It is found in the cytosol. Its subcellular location is the endosome. In terms of biological role, component of the ESCRT-I complex, a regulator of vesicular trafficking process. Binds to ubiquitinated cargo proteins and is required for the sorting of endocytic ubiquitinated cargos into multivesicular bodies (MVBs). Plays a role in the proteasomal degradation of ubiquitinated cell-surface proteins, such as EGFR and BST2. The protein is Ubiquitin-associated protein 1 of Mus musculus (Mouse).